The chain runs to 127 residues: Aspartate 1-decarboxylase (127 aa).

Catalysis depends on Ser-25, which acts as the Schiff-base intermediate with substrate; via pyruvic acid. Position 25 is a pyruvic acid (Ser) (Ser-25). Thr-57 serves as a coordination point for substrate. Tyr-58 serves as the catalytic Proton donor. Substrate is bound at residue 73 to 75 (GAA).

Belongs to the PanD family. Heterooctamer of four alpha and four beta subunits. Pyruvate is required as a cofactor. In terms of processing, is synthesized initially as an inactive proenzyme, which is activated by self-cleavage at a specific serine bond to produce a beta-subunit with a hydroxyl group at its C-terminus and an alpha-subunit with a pyruvoyl group at its N-terminus.

It localises to the cytoplasm. It catalyses the reaction L-aspartate + H(+) = beta-alanine + CO2. The protein operates within cofactor biosynthesis; (R)-pantothenate biosynthesis; beta-alanine from L-aspartate: step 1/1. Functionally, catalyzes the pyruvoyl-dependent decarboxylation of aspartate to produce beta-alanine. This Anoxybacillus flavithermus (strain DSM 21510 / WK1) protein is Aspartate 1-decarboxylase.